We begin with the raw amino-acid sequence, 499 residues long: Probable alkaline/neutral invertase F (499 aa).

S11 is modified (phosphoserine). T20 carries the post-translational modification Phosphothreonine. S497 is modified (phosphoserine).

This sequence belongs to the glycosyl hydrolase 100 family.

It carries out the reaction Hydrolysis of terminal non-reducing beta-D-fructofuranoside residues in beta-D-fructofuranosides.. Its function is as follows. Invertase that cleaves sucrose into glucose and fructose. The sequence is that of Probable alkaline/neutral invertase F from Arabidopsis thaliana (Mouse-ear cress).